The sequence spans 318 residues: Ubiquinol oxidase (318 aa).

The helical transmembrane segment at 150-170 threads the bilayer; it reads VVVLETVAAIPGMVGGMFRHL. Residues Glu-154, Glu-193, and His-196 each contribute to the Fe cation site. A helical transmembrane segment spans residues 212 to 232; sequence MLIKLGQFLFFNGYMVFYFVA. Glu-244, Glu-295, and His-298 together coordinate Fe cation.

The protein belongs to the alternative oxidase family. In terms of assembly, found as monomers and homodimers. Fe cation is required as a cofactor.

It is found in the mitosome membrane. The enzyme catalyses 2 a ubiquinol + O2 = 2 a ubiquinone + 2 H2O. Alternative oxidase which function may be to reoxidize reducing equivalents produced by glycolysis such as ubiquinol. The protein is Ubiquinol oxidase (AOX) of Trachipleistophora hominis (Microsporidian parasite).